We begin with the raw amino-acid sequence, 124 residues long: Large ribosomal subunit protein bL12 (124 aa).

The disordered stretch occupies residues 93 to 124; the sequence is GAPSTVKEGASKDEAEEAKKKLEEAGASVELK. The segment covering 101–116 has biased composition (basic and acidic residues); it reads GASKDEAEEAKKKLEE.

Belongs to the bacterial ribosomal protein bL12 family. In terms of assembly, homodimer. Part of the ribosomal stalk of the 50S ribosomal subunit. Forms a multimeric L10(L12)X complex, where L10 forms an elongated spine to which 2 to 4 L12 dimers bind in a sequential fashion. Binds GTP-bound translation factors.

Forms part of the ribosomal stalk which helps the ribosome interact with GTP-bound translation factors. Is thus essential for accurate translation. This chain is Large ribosomal subunit protein bL12, found in Marinobacter nauticus (strain ATCC 700491 / DSM 11845 / VT8) (Marinobacter aquaeolei).